A 192-amino-acid chain; its full sequence is Der GTPase-activating protein YihI (192 aa).

The disordered stretch occupies residues 1 to 80; sequence MSRTKKTRRI…KAAVKEVKDP (80 aa). Basic and acidic residues-rich tracts occupy residues 9-25, 37-48, and 65-80; these read RITD…KPEQ, TRYELDAKAREE, and DPAE…VKDP.

It belongs to the YihI family. In terms of assembly, interacts with Der.

In terms of biological role, a GTPase-activating protein (GAP) that modifies Der/EngA GTPase function. May play a role in ribosome biogenesis. This is Der GTPase-activating protein YihI from Actinobacillus pleuropneumoniae serotype 7 (strain AP76).